A 371-amino-acid chain; its full sequence is Cytochrome b (371 aa).

4 helical membrane passes run 25 to 45 (FGSM…FLAI), 69 to 90 (WIMQ…YIHI), 105 to 125 (WLTG…GYVL), and 170 to 190 (FFAL…IHII). His-75 and His-89 together coordinate heme b. Positions 174 and 188 each coordinate heme b. A ubiquinone is bound at residue His-193. 4 helical membrane-spanning segments follow: residues 218-238 (YKDL…LSFM), 280-300 (LGGA…PFTH), 312-332 (LAQT…WAAT), and 339-358 (FLLI…IMNP).

It belongs to the cytochrome b family. The cytochrome bc1 complex contains 3 respiratory subunits (MT-CYB, CYC1 and UQCRFS1), 2 core proteins (UQCRC1 and UQCRC2) and probably 6 low-molecular weight proteins. The cofactor is heme b.

The protein resides in the mitochondrion inner membrane. Its function is as follows. Component of the ubiquinol-cytochrome c reductase complex (complex III or cytochrome b-c1 complex) that is part of the mitochondrial respiratory chain. The b-c1 complex mediates electron transfer from ubiquinol to cytochrome c. Contributes to the generation of a proton gradient across the mitochondrial membrane that is then used for ATP synthesis. The sequence is that of Cytochrome b (MT-CYB) from Laticauda colubrina (Yellow-lipped sea krait).